We begin with the raw amino-acid sequence, 990 residues long: F-box/LRR-repeat protein 15 (990 aa).

In terms of domain architecture, F-box spans 190 to 236 (FEVHIDLTDDLLHMVFSFLNHVDLCRSAMVCRQWRVASAHEDFWRVL). LRR repeat units lie at residues 237 to 258 (NFENIRISMEQFENMCSRYPNA), 280 to 303 (LRNLEVLTIGKGHISESFFQALGE), 317 to 341 (LGNGAQEIHLSHDRLRELKITKCRV), 348 to 373 (CPQLRSLSLKRSNMSQAMLNCPLLQL), 397 to 423 (LESLDVSNCSCVSDETLREIAQACANL), 441 to 465 (LPMLTVLKLHSCEGITSASMTWIAN), 466 to 477 (SPALEVLELDNC), 478 to 503 (NLLTTVSLHLSRLQSISLVHCRKFTD), 519 to 542 (CPALRRITITSNALRRLALQKQEN), 550 to 574 (CHSLQEVDLSDCESLSNSVCKIFSD), 589 to 612 (CESLTAVRFCNSSLASLSLVGCRA), 614 to 633 (TSLELKCPRIEQICLDGCDH), 640 to 652 (QPVALRSLNLGIC), 653 to 678 (PKLSVLNIEAPYMVSLELKGCGVLSE), 734 to 756 (LPNLTVLDLSYTFLMNLEPVFKS), 758 to 782 (IQLKVLKLQACKYLTDSSLEPLYKE), 785 to 809 (LPALEELDLSYGTLCQTAIDDLLAC), 813 to 839 (LTHLSLNGCVNMHDLDWGSTSVHLFDY), 882 to 893 (FYHLSTLNLSLS), 894 to 914 (VNLKEVDLTCSNLVLLNLSNC), 915 to 937 (CSLEVLKLGCPRLASLFLQSCNM), and 949 to 973 (CSSLETLDLRFCPKISSVSMSKFRT).

This Arabidopsis thaliana (Mouse-ear cress) protein is F-box/LRR-repeat protein 15 (FBL15).